Here is a 350-residue protein sequence, read N- to C-terminus: Phosphotriesterase-related protein (350 aa).

The a divalent metal cation site is built by His22, His24, Glu169, His201, His230, and Asp298.

It belongs to the metallo-dependent hydrolases superfamily. Phosphotriesterase family. Requires a divalent metal cation as cofactor.

This is Phosphotriesterase-related protein from Drosophila yakuba (Fruit fly).